Consider the following 189-residue polypeptide: UPF0340 protein EF_1967 (189 aa).

It belongs to the UPF0340 family.

In Enterococcus faecalis (strain ATCC 700802 / V583), this protein is UPF0340 protein EF_1967.